The following is a 1396-amino-acid chain: Integrin alpha-PS2 (1396 aa).

Positions 1–31 are cleaved as a signal peptide; sequence MSGDSIHRRRMALHCPITSLILLLIAMSAHG. Topologically, residues 32 to 1341 are extracellular; sequence YNIDLPSYVR…EPEPLQVPDV (1310 aa). 7 FG-GAP repeats span residues 36–106, 117–174, 186–239, 266–317, 318–383, 386–445, and 452–514; these read LPSY…DCKL, NVDK…FTSH, RTNN…FPFK, STSE…RWNM, ANIF…TEEK, TTEH…GPLA, and KSEQ…FASN. Asn69 carries an N-linked (GlcNAc...) asparagine glycan. Residue Asn209 is glycosylated (N-linked (GlcNAc...) asparagine). N-linked (GlcNAc...) asparagine glycosylation occurs at Asn322. N-linked (GlcNAc...) asparagine glycosylation is found at Asn584, Asn598, Asn741, Asn783, Asn833, and Asn959. 2 disordered regions span residues 960–1107 and 1159–1246; these read STDA…LGTL and PGFQ…KPLQ. Basic and acidic residues predominate over residues 963-979; it reads AGDKLSPKQVEQRRQED. Residues 997–1006 are compositionally biased toward polar residues; it reads QAVQEPQVNQ. A glycan (N-linked (GlcNAc...) asparagine) is linked at Asn1005. Composition is skewed to low complexity over residues 1007 to 1021 and 1060 to 1071; these read TSFT…SSGS and QQQQQHQQLLLA. The span at 1082–1099 shows a compositional bias: polar residues; sequence VTFNDKSQFGGRNNNFHT. Composition is skewed to low complexity over residues 1162–1182 and 1217–1226; these read QGQT…GYQT and SSSSSSSSSS. N-linked (GlcNAc...) asparagine glycans are attached at residues Asn1299 and Asn1307. A helical membrane pass occupies residues 1342-1366; the sequence is VPLWVVVLAACAGALIFLLLVWLLY. The Cytoplasmic portion of the chain corresponds to 1367–1396; sequence KCGFFNRNRPTDHSQERQPLRNGYHGDEHL. The segment at 1377 to 1396 is disordered; the sequence is TDHSQERQPLRNGYHGDEHL.

Belongs to the integrin alpha chain family. As to quaternary structure, heterodimer of an alpha and a beta subunit. The alpha subunit is composed of a heavy and a light chain linked by a disulfide bond. Alpha-PS2 associates with beta-PS. The heavy-light chain cleavage site is either in 1230-1231, or 1233-1234, or 1243-1244. As to expression, in ovaries, highly expressed in follicle cells. At syncytial blastoderm stage, expressed in the embryonic mesodermal precursors but not in the ectoderm. At embryonic stages 7 and 10, expression is restricted to the mesoderm. At stage 12, expressed in the gonadal sheath and the interstitial cells of the gonad. In stage 16 embryos, expressed in the somatic and visceral muscles where localizes to sites of attachment between adjacent muscles. In third larval instar wing imaginal disk, expressed in the ventral compartment and in a subset of adepithelial and peripodial cells (at protein level).

The protein resides in the apical cell membrane. It localises to the lateral cell membrane. The protein localises to the basal cell membrane. In terms of biological role, alpha-PS2/beta-PS is a receptor for Tig, wb and Ten-m. Involved in the function and/or development of the olfactory system. The protein is Integrin alpha-PS2 (if) of Drosophila melanogaster (Fruit fly).